A 189-amino-acid polypeptide reads, in one-letter code: uncharacterized protein (189 aa).

A Macro domain is found at 1–174 (MKCWTLGDRV…GMEKGVREAL (174 aa)).

This is an uncharacterized protein from Aeropyrum pernix (strain ATCC 700893 / DSM 11879 / JCM 9820 / NBRC 100138 / K1).